Reading from the N-terminus, the 423-residue chain is Elongation factor 1-alpha (423 aa).

The tr-type G domain occupies 5–221; it reads KEHINVAFIG…DLLKPPEKLV (217 aa). The interval 14–21 is G1; the sequence is GHVDHGKS. 14-21 contacts GTP; that stretch reads GHVDHGKS. Residue Ser21 coordinates Mg(2+). The tract at residues 70-74 is G2; sequence GVTID. The tract at residues 91–94 is G3; that stretch reads DCPG. Residues 91-95 and 146-149 each bind GTP; these read DCPGH and NKMD. Residues 146 to 149 are G4; sequence NKMD. The G5 stretch occupies residues 185-187; that stretch reads SAY.

It belongs to the TRAFAC class translation factor GTPase superfamily. Classic translation factor GTPase family. EF-Tu/EF-1A subfamily.

The protein resides in the cytoplasm. The enzyme catalyses GTP + H2O = GDP + phosphate + H(+). GTP hydrolase that promotes the GTP-dependent binding of aminoacyl-tRNA to the A-site of ribosomes during protein biosynthesis. The protein is Elongation factor 1-alpha of Archaeoglobus fulgidus (strain ATCC 49558 / DSM 4304 / JCM 9628 / NBRC 100126 / VC-16).